Reading from the N-terminus, the 116-residue chain is Large ribosomal subunit protein bL17 (116 aa).

This sequence belongs to the bacterial ribosomal protein bL17 family. As to quaternary structure, part of the 50S ribosomal subunit. Contacts protein L32.

This Synechocystis sp. (strain ATCC 27184 / PCC 6803 / Kazusa) protein is Large ribosomal subunit protein bL17.